The sequence spans 351 residues: Hydroxymethylglutaryl-CoA synthase (351 aa).

Residue Asp-30 coordinates (3S)-3-hydroxy-3-methylglutaryl-CoA. The active-site Proton donor/acceptor is the Glu-82. The (3S)-3-hydroxy-3-methylglutaryl-CoA site is built by Cys-114, Ser-155, Thr-203, and His-236. Catalysis depends on Cys-114, which acts as the Acyl-thioester intermediate. Catalysis depends on His-236, which acts as the Proton donor/acceptor. A CoA-binding site is contributed by Arg-241. (3S)-3-hydroxy-3-methylglutaryl-CoA is bound by residues Arg-245, Asn-268, and Ser-298.

This sequence belongs to the thiolase-like superfamily. Archaeal HMG-CoA synthase family. As to quaternary structure, interacts with acetoacetyl-CoA thiolase that catalyzes the precedent step in the pathway and with a DUF35 protein. The acetoacetyl-CoA thiolase/HMG-CoA synthase complex channels the intermediate via a fused CoA-binding site, which allows for efficient coupling of the endergonic thiolase reaction with the exergonic HMGCS reaction.

The catalysed reaction is acetoacetyl-CoA + acetyl-CoA + H2O = (3S)-3-hydroxy-3-methylglutaryl-CoA + CoA + H(+). It functions in the pathway metabolic intermediate biosynthesis; (R)-mevalonate biosynthesis; (R)-mevalonate from acetyl-CoA: step 2/3. Its function is as follows. Catalyzes the condensation of acetyl-CoA with acetoacetyl-CoA to form 3-hydroxy-3-methylglutaryl-CoA (HMG-CoA). Functions in the mevalonate (MVA) pathway leading to isopentenyl diphosphate (IPP), a key precursor for the biosynthesis of isoprenoid compounds that are building blocks of archaeal membrane lipids. In Pyrobaculum neutrophilum (strain DSM 2338 / JCM 9278 / NBRC 100436 / V24Sta) (Thermoproteus neutrophilus), this protein is Hydroxymethylglutaryl-CoA synthase.